A 515-amino-acid polypeptide reads, in one-letter code: Probable cytosol aminopeptidase (515 aa).

Residues lysine 279 and aspartate 284 each coordinate Mn(2+). Lysine 291 is an active-site residue. Positions 302, 361, and 363 each coordinate Mn(2+). The active site involves arginine 365.

This sequence belongs to the peptidase M17 family. The cofactor is Mn(2+).

The protein localises to the cytoplasm. The enzyme catalyses Release of an N-terminal amino acid, Xaa-|-Yaa-, in which Xaa is preferably Leu, but may be other amino acids including Pro although not Arg or Lys, and Yaa may be Pro. Amino acid amides and methyl esters are also readily hydrolyzed, but rates on arylamides are exceedingly low.. The catalysed reaction is Release of an N-terminal amino acid, preferentially leucine, but not glutamic or aspartic acids.. Presumably involved in the processing and regular turnover of intracellular proteins. Catalyzes the removal of unsubstituted N-terminal amino acids from various peptides. The polypeptide is Probable cytosol aminopeptidase (Mycobacterium tuberculosis (strain ATCC 25177 / H37Ra)).